A 148-amino-acid polypeptide reads, in one-letter code: Lysozyme C (148 aa).

A signal peptide spans 1–18 (MKAVIILGLVLLSVTVQG). In terms of domain architecture, C-type lysozyme spans 19–148 (KIFERCELAR…VSQYVQGCGV (130 aa)). 4 disulfide bridges follow: C24/C146, C48/C134, C83/C99, and C95/C113. Residues E53 and D71 contribute to the active site.

It belongs to the glycosyl hydrolase 22 family. Monomer.

It carries out the reaction Hydrolysis of (1-&gt;4)-beta-linkages between N-acetylmuramic acid and N-acetyl-D-glucosamine residues in a peptidoglycan and between N-acetyl-D-glucosamine residues in chitodextrins.. In terms of biological role, lysozymes have primarily a bacteriolytic function; those in tissues and body fluids are associated with the monocyte-macrophage system and enhance the activity of immunoagents. In Erythrocebus patas (Red guenon), this protein is Lysozyme C (LYZ).